The sequence spans 150 residues: MEKANASTSAKTIDQLCKECNLCMHSLQILCVFCRKTLSTAEVYAFQYKDLNIVWQGNFPFAACACCLEIQGKVNQYRHFDFAAYAVTVEEEINKSIFDVRIRCYLCHKPLCDVEKLRHILEKARFIKLNCEWKGRCFHCWTSCMENILP.

Zinc fingers lie at residues 31–67 (CVFC…CACC) and 104–140 (CYLC…CFHC).

Belongs to the papillomaviridae E6 protein family. Forms homodimers. Interacts with ubiquitin-protein ligase UBE3A/E6-AP; this interaction stimulates UBE3A ubiquitin activity. Interacts with host TP53 and EP300; this interaction inhibits TP53 activity.

Its subcellular location is the host cytoplasm. The protein localises to the host nucleus. Plays a major role in the induction and maintenance of cellular transformation. E6 associates with host UBE3A/E6-AP ubiquitin-protein ligase and modulates its activity. Sequesters tumor suppressor TP53 in the host cytoplasm and modulates its activity by interacting with host EP300 that results in the reduction of TP53 acetylation and activation. In turn, apoptosis induced by DNA damage is inhibited. E6 also protects host keratinocytes from apoptosis by mediating the degradation of host BAK1. May also inhibit host immune response. This Pygmy chimpanzee papillomavirus type 1 (PCPV-1) protein is Protein E6.